We begin with the raw amino-acid sequence, 257 residues long: 3-deoxy-manno-octulosonate cytidylyltransferase (257 aa).

Belongs to the KdsB family.

Its subcellular location is the cytoplasm. The catalysed reaction is 3-deoxy-alpha-D-manno-oct-2-ulosonate + CTP = CMP-3-deoxy-beta-D-manno-octulosonate + diphosphate. The protein operates within nucleotide-sugar biosynthesis; CMP-3-deoxy-D-manno-octulosonate biosynthesis; CMP-3-deoxy-D-manno-octulosonate from 3-deoxy-D-manno-octulosonate and CTP: step 1/1. Its pathway is bacterial outer membrane biogenesis; lipopolysaccharide biosynthesis. Functionally, activates KDO (a required 8-carbon sugar) for incorporation into bacterial lipopolysaccharide in Gram-negative bacteria. This chain is 3-deoxy-manno-octulosonate cytidylyltransferase, found in Methylobacillus flagellatus (strain ATCC 51484 / DSM 6875 / VKM B-1610 / KT).